Consider the following 1462-residue polypeptide: Tyrosine-protein phosphatase 69D (1462 aa).

The first 28 residues, 1 to 28 (MALLYRRMSMLLNIILAYIFLCAICVQG), serve as a signal peptide directing secretion. Ig-like C2-type domains follow at residues 29 to 125 (SVKQ…TEFQ) and 131 to 230 (PSKV…KEIT). The Extracellular segment spans residues 29–805 (SVKQEWAEIG…MDYYLSIGVK (777 aa)). N-linked (GlcNAc...) asparagine glycosylation is found at Asn40, Asn58, Asn64, Asn85, Asn109, Asn119, Asn162, Asn191, Asn196, Asn209, Asn255, Asn288, Asn302, Asn429, Asn442, Asn451, Asn516, Asn613, Asn701, and Asn755. Cys45 and Cys112 are oxidised to a cystine. An intrachain disulfide couples Cys154 to Cys214. 3 Fibronectin type-III domains span residues 237 to 332 (PQVS…TLSY), 334 to 435 (PIFI…TMDG), and 439 to 547 (KPTN…TPDA). The chain crosses the membrane as a helical span at residues 806 to 823 (AGAVLLGVILVFIVLWVF). Residues 824–1462 (HHKKTKNELQ…LHHIAESTLD (639 aa)) lie on the Cytoplasmic side of the membrane. 2 consecutive Tyrosine-protein phosphatase domains span residues 893 to 1156 (FLRE…LLDT) and 1187 to 1450 (LEVE…IINY). Residues Cys1097 and Cys1391 each act as phosphocysteine intermediate in the active site.

This sequence belongs to the protein-tyrosine phosphatase family. Receptor class subfamily.

It localises to the membrane. The enzyme catalyses O-phospho-L-tyrosyl-[protein] + H2O = L-tyrosyl-[protein] + phosphate. Functionally, possible cell adhesion receptor. In Drosophila melanogaster (Fruit fly), this protein is Tyrosine-protein phosphatase 69D (Ptp69D).